We begin with the raw amino-acid sequence, 244 residues long: MFYTLPKQLEINNLTVSYPHGTVLQNIFLTIESGKLIGIIGPNGAGKSTLLKTIIEQIKPISGEIFYQGAPLKNQRARIGYVPQRAQVDWDFPINVWDVVMMARLKKIGWFSSYSKKSYECVKAALEKVDMLKYKDRNIRELSGGQQQRVFLARLLAQEADLLLLDEPFTGVDFQTQKIIFSLLKEQIASNKIVIVIHHDLGESIINFDELILLNKKIISHDLTTKILNSKKLSTLFGEHIYAN.

One can recognise an ABC transporter domain in the interval L9–I241. Position 41–48 (G41–S48) interacts with ATP.

Belongs to the ABC transporter superfamily.

Its subcellular location is the plastid. It localises to the cyanelle. The chain is Probable ABC transporter ATP-binding protein in ycf23-apcF intergenic region from Cyanophora paradoxa.